A 427-amino-acid chain; its full sequence is UDP-N-acetylglucosamine 1-carboxyvinyltransferase 2 (427 aa).

Residue 19–20 coordinates phosphoenolpyruvate; the sequence is KN. A UDP-N-acetyl-alpha-D-glucosamine-binding site is contributed by arginine 91. Residue cysteine 115 is the Proton donor of the active site. A 2-(S-cysteinyl)pyruvic acid O-phosphothioketal modification is found at cysteine 115. Residues aspartate 307 and valine 329 each coordinate UDP-N-acetyl-alpha-D-glucosamine.

The protein belongs to the EPSP synthase family. MurA subfamily.

It localises to the cytoplasm. It catalyses the reaction phosphoenolpyruvate + UDP-N-acetyl-alpha-D-glucosamine = UDP-N-acetyl-3-O-(1-carboxyvinyl)-alpha-D-glucosamine + phosphate. Its pathway is cell wall biogenesis; peptidoglycan biosynthesis. Its function is as follows. Cell wall formation. Adds enolpyruvyl to UDP-N-acetylglucosamine. The polypeptide is UDP-N-acetylglucosamine 1-carboxyvinyltransferase 2 (Prochlorococcus marinus (strain SARG / CCMP1375 / SS120)).